A 303-amino-acid polypeptide reads, in one-letter code: Aspartate carbamoyltransferase catalytic subunit (303 aa).

Positions 54 and 55 each coordinate carbamoyl phosphate. Lys-83 lines the L-aspartate pocket. Residues Arg-104, His-132, and Gln-135 each coordinate carbamoyl phosphate. L-aspartate contacts are provided by Arg-164 and Arg-226. Carbamoyl phosphate-binding residues include Leu-265 and Pro-266.

It belongs to the aspartate/ornithine carbamoyltransferase superfamily. ATCase family. In terms of assembly, heterooligomer of catalytic and regulatory chains.

The catalysed reaction is carbamoyl phosphate + L-aspartate = N-carbamoyl-L-aspartate + phosphate + H(+). Its pathway is pyrimidine metabolism; UMP biosynthesis via de novo pathway; (S)-dihydroorotate from bicarbonate: step 2/3. Functionally, catalyzes the condensation of carbamoyl phosphate and aspartate to form carbamoyl aspartate and inorganic phosphate, the committed step in the de novo pyrimidine nucleotide biosynthesis pathway. The protein is Aspartate carbamoyltransferase catalytic subunit of Methanocorpusculum labreanum (strain ATCC 43576 / DSM 4855 / Z).